A 605-amino-acid polypeptide reads, in one-letter code: Elongation factor 4 (605 aa).

One can recognise a tr-type G domain in the interval 11-193 (KRIRNFSIIA…KVVSNIPSPR (183 aa)). GTP is bound by residues 23–28 (DHGKST) and 140–143 (NKID).

The protein belongs to the TRAFAC class translation factor GTPase superfamily. Classic translation factor GTPase family. LepA subfamily.

The protein resides in the cell membrane. The catalysed reaction is GTP + H2O = GDP + phosphate + H(+). Its function is as follows. Required for accurate and efficient protein synthesis under certain stress conditions. May act as a fidelity factor of the translation reaction, by catalyzing a one-codon backward translocation of tRNAs on improperly translocated ribosomes. Back-translocation proceeds from a post-translocation (POST) complex to a pre-translocation (PRE) complex, thus giving elongation factor G a second chance to translocate the tRNAs correctly. Binds to ribosomes in a GTP-dependent manner. The polypeptide is Elongation factor 4 (Phytoplasma mali (strain AT)).